The chain runs to 126 residues: Protein LiaI (126 aa).

2 helical membrane passes run phenylalanine 11–isoleucine 31 and isoleucine 56–isoleucine 76.

The protein localises to the cell membrane. The protein is Protein LiaI (liaI) of Bacillus subtilis (strain 168).